Consider the following 274-residue polypeptide: Leucine-rich repeat-containing protein 10 (274 aa).

8 LRR repeats span residues 30 to 51 (LDRM…VCSF), 52 to 74 (TELV…LAQL), 76 to 97 (NLQI…VCTL), 98 to 120 (KQLC…LSLL), 121 to 143 (QNLR…VCEL), 145 to 166 (LLKT…LRRL), 167 to 189 (RELR…LLRM), and 191 to 213 (FLEV…HLTN). The disordered stretch occupies residues 236–274 (RVGRWAEETPEPDPRKARRYALAKEENQEPPPPLLPSSS). The segment covering 239–250 (RWAEETPEPDPR) has biased composition (basic and acidic residues). Pro residues predominate over residues 264 to 274 (EPPPPLLPSSS).

In terms of tissue distribution, detected specifically in the heart.

It is found in the nucleus. May play important roles in cardiac development and/or cardiac function. This is Leucine-rich repeat-containing protein 10 (Lrrc10) from Mus musculus (Mouse).